The sequence spans 308 residues: Ribose 1,5-bisphosphate isomerase (308 aa).

Residues 24-27 and R67 contribute to the substrate site; that span reads RGAG. The Proton acceptor role is filled by C129. The active-site Proton donor is D198. Residues 208–209 and K234 contribute to the substrate site; that span reads NK.

This sequence belongs to the eIF-2B alpha/beta/delta subunits family. R15P isomerase subfamily.

The catalysed reaction is alpha-D-ribose 1,5-bisphosphate = D-ribulose 1,5-bisphosphate. In terms of biological role, catalyzes the isomerization of ribose 1,5-bisphosphate (R15P) to ribulose 1,5-bisphosphate (RuBP), the CO(2) acceptor and substrate for RubisCO. Functions in an archaeal AMP degradation pathway, together with AMP phosphorylase and RubisCO. The chain is Ribose 1,5-bisphosphate isomerase from Methanocaldococcus jannaschii (strain ATCC 43067 / DSM 2661 / JAL-1 / JCM 10045 / NBRC 100440) (Methanococcus jannaschii).